The primary structure comprises 71 residues: Keratin-associated protein 6-1 (71 aa).

The protein belongs to the KRTAP type 6 family. As to quaternary structure, interacts with hair keratins.

Functionally, in the hair cortex, hair keratin intermediate filaments are embedded in an interfilamentous matrix, consisting of hair keratin-associated proteins (KRTAP), which are essential for the formation of a rigid and resistant hair shaft through their extensive disulfide bond cross-linking with abundant cysteine residues of hair keratins. The matrix proteins include the high-sulfur and high-glycine-tyrosine keratins. This chain is Keratin-associated protein 6-1 (KRTAP6-1), found in Homo sapiens (Human).